The sequence spans 121 residues: uncharacterized protein (121 aa).

The helical transmembrane segment at 65–84 (TILFYTPTLICFLFLQNFLY) threads the bilayer.

It localises to the membrane. This is an uncharacterized protein from Saccharomyces cerevisiae (strain ATCC 204508 / S288c) (Baker's yeast).